Reading from the N-terminus, the 474-residue chain is Siroheme synthase (474 aa).

A precorrin-2 dehydrogenase /sirohydrochlorin ferrochelatase region spans residues 1–202 (MEYLPIFIDL…GRPKEANKVL (202 aa)). NAD(+) is bound by residues 22–23 (AV) and 41–42 (PA). Ser126 carries the phosphoserine modification. A uroporphyrinogen-III C-methyltransferase region spans residues 218–474 (GHVTLVGAGP…YLINSIINLI (257 aa)). An S-adenosyl-L-methionine-binding site is contributed by Pro227. Asp250 (proton acceptor) is an active-site residue. The active-site Proton donor is Lys272. S-adenosyl-L-methionine-binding positions include 303–305 (GGD), Ile308, 333–334 (TA), Met385, and Gly414.

It in the N-terminal section; belongs to the precorrin-2 dehydrogenase / sirohydrochlorin ferrochelatase family. In the C-terminal section; belongs to the precorrin methyltransferase family.

It carries out the reaction uroporphyrinogen III + 2 S-adenosyl-L-methionine = precorrin-2 + 2 S-adenosyl-L-homocysteine + H(+). The enzyme catalyses precorrin-2 + NAD(+) = sirohydrochlorin + NADH + 2 H(+). The catalysed reaction is siroheme + 2 H(+) = sirohydrochlorin + Fe(2+). Its pathway is cofactor biosynthesis; adenosylcobalamin biosynthesis; precorrin-2 from uroporphyrinogen III: step 1/1. It functions in the pathway cofactor biosynthesis; adenosylcobalamin biosynthesis; sirohydrochlorin from precorrin-2: step 1/1. The protein operates within porphyrin-containing compound metabolism; siroheme biosynthesis; precorrin-2 from uroporphyrinogen III: step 1/1. It participates in porphyrin-containing compound metabolism; siroheme biosynthesis; siroheme from sirohydrochlorin: step 1/1. Its pathway is porphyrin-containing compound metabolism; siroheme biosynthesis; sirohydrochlorin from precorrin-2: step 1/1. Multifunctional enzyme that catalyzes the SAM-dependent methylations of uroporphyrinogen III at position C-2 and C-7 to form precorrin-2 via precorrin-1. Then it catalyzes the NAD-dependent ring dehydrogenation of precorrin-2 to yield sirohydrochlorin. Finally, it catalyzes the ferrochelation of sirohydrochlorin to yield siroheme. The sequence is that of Siroheme synthase from Blochmanniella pennsylvanica (strain BPEN).